A 451-amino-acid chain; its full sequence is Glycylpeptide N-tetradecanoyltransferase (451 aa).

Tetradecanoyl-CoA contacts are provided by residues 34 to 37, 167 to 169, and 175 to 179; these read YKFW, LCV, and SKRLT. Catalysis depends on leucine 451, which acts as the Proton acceptor; via carboxylate.

This sequence belongs to the NMT family. In terms of assembly, monomer.

It is found in the cytoplasm. It catalyses the reaction N-terminal glycyl-[protein] + tetradecanoyl-CoA = N-tetradecanoylglycyl-[protein] + CoA + H(+). Adds a myristoyl group to the N-terminal glycine residue of certain cellular proteins. In Candida glabrata (strain ATCC 2001 / BCRC 20586 / JCM 3761 / NBRC 0622 / NRRL Y-65 / CBS 138) (Yeast), this protein is Glycylpeptide N-tetradecanoyltransferase (NMT1).